The chain runs to 490 residues: ATP synthase subunit beta, chloroplastic (490 aa).

169-176 lines the ATP pocket; that stretch reads GGAGVGKT.

It belongs to the ATPase alpha/beta chains family. In terms of assembly, F-type ATPases have 2 components, CF(1) - the catalytic core - and CF(0) - the membrane proton channel. CF(1) has five subunits: alpha(3), beta(3), gamma(1), delta(1), epsilon(1). CF(0) has four main subunits: a(1), b(1), b'(1) and c(9-12).

The protein resides in the plastid. The protein localises to the chloroplast thylakoid membrane. It catalyses the reaction ATP + H2O + 4 H(+)(in) = ADP + phosphate + 5 H(+)(out). Functionally, produces ATP from ADP in the presence of a proton gradient across the membrane. The catalytic sites are hosted primarily by the beta subunits. The protein is ATP synthase subunit beta, chloroplastic of Cyanidium caldarium (Red alga).